We begin with the raw amino-acid sequence, 574 residues long: GRB2-associated-binding protein 4 (574 aa).

A disordered region spans residues M1 to G33. One can recognise a PH domain in the interval H39–G152. Disordered stretches follow at residues P176 to H200, L215 to S234, S293 to E331, and P418 to T513. A compositionally biased stretch (polar residues) spans C181 to T193. Polar residues-rich tracts occupy residues G302 to Y318 and L424 to V442. Residues S457–T478 show a composition bias toward low complexity. Positions G502–T513 are enriched in polar residues.

The protein belongs to the GAB family.

The polypeptide is GRB2-associated-binding protein 4 (GAB4) (Homo sapiens (Human)).